The primary structure comprises 168 residues: uncharacterized protein (168 aa).

Disordered regions lie at residues 37-74 (GGSK…SQFT), 81-100 (QYNY…PNYY), and 117-168 (MQPF…EETN). Composition is skewed to polar residues over residues 52–74 (HSGQ…SQFT) and 82–95 (YNYN…TRSV). Positions 120–129 (FNNQSFNNQS) are enriched in low complexity. Over residues 130-158 (RTHQSKTYQHNQQKRSFNGPRNNGPQNNV) the composition is skewed to polar residues.

This is an uncharacterized protein from Acanthamoeba polyphaga (Amoeba).